We begin with the raw amino-acid sequence, 172 residues long: Small ribosomal subunit protein uS5 (172 aa).

Residues 17–80 (LREKMISVNR…DEARRKMVKV (64 aa)) form the S5 DRBM domain.

The protein belongs to the universal ribosomal protein uS5 family. As to quaternary structure, part of the 30S ribosomal subunit. Contacts proteins S4 and S8.

Functionally, with S4 and S12 plays an important role in translational accuracy. Its function is as follows. Located at the back of the 30S subunit body where it stabilizes the conformation of the head with respect to the body. The sequence is that of Small ribosomal subunit protein uS5 from Cupriavidus metallidurans (strain ATCC 43123 / DSM 2839 / NBRC 102507 / CH34) (Ralstonia metallidurans).